The following is a 298-amino-acid chain: Inosose dehydratase 2 (298 aa).

The protein belongs to the IolE/MocC family. Glutathione serves as cofactor. The cofactor is Co(2+). It depends on Mn(2+) as a cofactor.

It carries out the reaction scyllo-inosose = 3D-3,5/4-trihydroxycyclohexane-1,2-dione + H2O. Its pathway is polyol metabolism; myo-inositol degradation into acetyl-CoA; acetyl-CoA from myo-inositol: step 2/7. Its function is as follows. Catalyzes the dehydration of inosose (2-keto-myo-inositol, 2KMI or 2,4,6/3,5-pentahydroxycyclohexanone) to 3D-(3,5/4)-trihydroxycyclohexane-1,2-dione (D-2,3-diketo-4-deoxy-epi-inositol). This chain is Inosose dehydratase 2, found in Bacillus cereus (strain ZK / E33L).